A 351-amino-acid chain; its full sequence is Ribosomal RNA large subunit methyltransferase M (351 aa).

S-adenosyl-L-methionine-binding positions include Ser186, 219–222, Asp238, Asp258, and Asp274; that span reads APGG. Residue Lys303 is the Proton acceptor of the active site.

The protein belongs to the class I-like SAM-binding methyltransferase superfamily. RNA methyltransferase RlmE family. RlmM subfamily. In terms of assembly, monomer.

It is found in the cytoplasm. It catalyses the reaction cytidine(2498) in 23S rRNA + S-adenosyl-L-methionine = 2'-O-methylcytidine(2498) in 23S rRNA + S-adenosyl-L-homocysteine + H(+). In terms of biological role, catalyzes the 2'-O-methylation at nucleotide C2498 in 23S rRNA. The protein is Ribosomal RNA large subunit methyltransferase M of Xylella fastidiosa (strain M23).